The primary structure comprises 285 residues: Phasyl DNA replicon protein arp (285 aa).

Essential for autonomous replication of the phasyl DNA replicon. The sequence is that of Phasyl DNA replicon protein arp (arp) from Escherichia coli.